A 158-amino-acid polypeptide reads, in one-letter code: Dysbindin domain-containing protein 1 (158 aa).

The disordered stretch occupies residues 1–38 (MEPSEGASPGGLVKEVDMPQAALSAPVPVTGTSGQSPM). Residues Ser95 and Ser119 each carry the phosphoserine modification. A disordered region spans residues 96-158 (DDENVASDSH…ILTVERPKED (63 aa)). The span at 125–141 (TRAEQNREKQPFGDPER) shows a compositional bias: basic and acidic residues.

This sequence belongs to the dysbindin family.

This is Dysbindin domain-containing protein 1 (DBNDD1) from Bos taurus (Bovine).